Here is a 362-residue protein sequence, read N- to C-terminus: 3-dehydroquinate synthase (362 aa).

Residues 73 to 78 (DAEAGK), 107 to 111 (GAATD), 131 to 132 (TT), lysine 144, lysine 153, and 171 to 174 (TLQT) each bind NAD(+). Zn(2+)-binding residues include glutamate 186, histidine 249, and histidine 265.

The protein belongs to the sugar phosphate cyclases superfamily. Dehydroquinate synthase family. The cofactor is NAD(+). Co(2+) is required as a cofactor. Requires Zn(2+) as cofactor.

It is found in the cytoplasm. The enzyme catalyses 7-phospho-2-dehydro-3-deoxy-D-arabino-heptonate = 3-dehydroquinate + phosphate. Its pathway is metabolic intermediate biosynthesis; chorismate biosynthesis; chorismate from D-erythrose 4-phosphate and phosphoenolpyruvate: step 2/7. In terms of biological role, catalyzes the conversion of 3-deoxy-D-arabino-heptulosonate 7-phosphate (DAHP) to dehydroquinate (DHQ). The chain is 3-dehydroquinate synthase from Mycobacterium bovis (strain ATCC BAA-935 / AF2122/97).